We begin with the raw amino-acid sequence, 640 residues long: Chaperone protein HtpG (640 aa).

The interval Met1 to Arg343 is a; substrate-binding. Residues Glu344–Arg564 are b. Positions Leu565–Lys640 are c.

It belongs to the heat shock protein 90 family. Homodimer.

Its subcellular location is the cytoplasm. Molecular chaperone. Has ATPase activity. In Nitrosomonas eutropha (strain DSM 101675 / C91 / Nm57), this protein is Chaperone protein HtpG.